Consider the following 662-residue polypeptide: DNA ligase (662 aa).

NAD(+)-binding positions include 34–38, 83–84, and Glu113; these read DYEYD and SI. Catalysis depends on Lys115, which acts as the N6-AMP-lysine intermediate. 4 residues coordinate NAD(+): Arg136, Glu172, Lys286, and Lys310. Positions 404, 407, 422, and 427 each coordinate Zn(2+). The 80-residue stretch at 583-662 folds into the BRCT domain; that stretch reads KSGSTCFGKA…EAFTNLIHLE (80 aa).

This sequence belongs to the NAD-dependent DNA ligase family. LigA subfamily. The cofactor is Mg(2+). It depends on Mn(2+) as a cofactor.

The catalysed reaction is NAD(+) + (deoxyribonucleotide)n-3'-hydroxyl + 5'-phospho-(deoxyribonucleotide)m = (deoxyribonucleotide)n+m + AMP + beta-nicotinamide D-nucleotide.. Functionally, DNA ligase that catalyzes the formation of phosphodiester linkages between 5'-phosphoryl and 3'-hydroxyl groups in double-stranded DNA using NAD as a coenzyme and as the energy source for the reaction. It is essential for DNA replication and repair of damaged DNA. This Chlamydia pneumoniae (Chlamydophila pneumoniae) protein is DNA ligase.